We begin with the raw amino-acid sequence, 404 residues long: Cysteine desulfurase IscS (404 aa).

Pyridoxal 5'-phosphate contacts are provided by residues 75-76 (AT), N155, Q183, and 203-205 (SAH). N6-(pyridoxal phosphate)lysine is present on K206. T243 serves as a coordination point for pyridoxal 5'-phosphate. C328 functions as the Cysteine persulfide intermediate in the catalytic mechanism. Residue C328 coordinates [2Fe-2S] cluster.

Belongs to the class-V pyridoxal-phosphate-dependent aminotransferase family. NifS/IscS subfamily. Homodimer. Forms a heterotetramer with IscU, interacts with other sulfur acceptors. Pyridoxal 5'-phosphate serves as cofactor.

It is found in the cytoplasm. It catalyses the reaction (sulfur carrier)-H + L-cysteine = (sulfur carrier)-SH + L-alanine. It functions in the pathway cofactor biosynthesis; iron-sulfur cluster biosynthesis. In terms of biological role, master enzyme that delivers sulfur to a number of partners involved in Fe-S cluster assembly, tRNA modification or cofactor biosynthesis. Catalyzes the removal of elemental sulfur atoms from cysteine to produce alanine. Functions as a sulfur delivery protein for Fe-S cluster synthesis onto IscU, an Fe-S scaffold assembly protein, as well as other S acceptor proteins. The sequence is that of Cysteine desulfurase IscS from Neisseria meningitidis serogroup A / serotype 4A (strain DSM 15465 / Z2491).